The following is a 318-amino-acid chain: UDP-3-O-acylglucosamine N-acyltransferase (318 aa).

The active-site Proton acceptor is His-230.

The protein belongs to the transferase hexapeptide repeat family. LpxD subfamily. Homotrimer.

It catalyses the reaction a UDP-3-O-[(3R)-3-hydroxyacyl]-alpha-D-glucosamine + a (3R)-hydroxyacyl-[ACP] = a UDP-2-N,3-O-bis[(3R)-3-hydroxyacyl]-alpha-D-glucosamine + holo-[ACP] + H(+). It participates in bacterial outer membrane biogenesis; LPS lipid A biosynthesis. Its function is as follows. Catalyzes the N-acylation of UDP-3-O-acylglucosamine using 3-hydroxyacyl-ACP as the acyl donor. Is involved in the biosynthesis of lipid A, a phosphorylated glycolipid that anchors the lipopolysaccharide to the outer membrane of the cell. In Wolinella succinogenes (strain ATCC 29543 / DSM 1740 / CCUG 13145 / JCM 31913 / LMG 7466 / NCTC 11488 / FDC 602W) (Vibrio succinogenes), this protein is UDP-3-O-acylglucosamine N-acyltransferase.